The following is a 78-amino-acid chain: Short neurotoxin SNTX11 (78 aa).

The N-terminal stretch at 1–21 (MKTLLLTFLVVTIVCLDLGYT) is a signal peptide. 4 disulfides stabilise this stretch: cysteine 24-cysteine 40, cysteine 33-cysteine 58, cysteine 62-cysteine 70, and cysteine 71-cysteine 76.

Belongs to the three-finger toxin family. Short-chain subfamily. As to expression, expressed by the venom gland.

It localises to the secreted. Functionally, this three-finger toxin binds and inhibits the nicotinic acetylcholine receptor (nAChR). In Ophiophagus hannah (King cobra), this protein is Short neurotoxin SNTX11.